The sequence spans 388 residues: Deoxyguanosinetriphosphate triphosphohydrolase-like protein (388 aa).

Positions 1 to 32 are disordered; it reads MSVGMAAPRAPYSCDPDRSRGRLFAEPPSRTR. Residues 69–205 enclose the HD domain; it reads RLTHSLEVAQ…AALADDIAYD (137 aa).

Belongs to the dGTPase family. Type 2 subfamily.

This Bradyrhizobium sp. (strain ORS 278) protein is Deoxyguanosinetriphosphate triphosphohydrolase-like protein.